The following is a 283-amino-acid chain: Nucleotide-binding protein ACIAD3059 (283 aa).

9–16 (GQSGSGKS) lines the ATP pocket. 59–62 (DVRS) contacts GTP.

Belongs to the RapZ-like family.

Functionally, displays ATPase and GTPase activities. The protein is Nucleotide-binding protein ACIAD3059 of Acinetobacter baylyi (strain ATCC 33305 / BD413 / ADP1).